Consider the following 390-residue polypeptide: Chorismate synthase (390 aa).

2 residues coordinate NADP(+): Arg-39 and Arg-45. FMN contacts are provided by residues 132–134, 253–254, Gly-298, 313–317, and Arg-339; these read RSS, NA, and KPIPT.

It belongs to the chorismate synthase family. Homotetramer. FMNH2 is required as a cofactor.

The catalysed reaction is 5-O-(1-carboxyvinyl)-3-phosphoshikimate = chorismate + phosphate. It functions in the pathway metabolic intermediate biosynthesis; chorismate biosynthesis; chorismate from D-erythrose 4-phosphate and phosphoenolpyruvate: step 7/7. Catalyzes the anti-1,4-elimination of the C-3 phosphate and the C-6 proR hydrogen from 5-enolpyruvylshikimate-3-phosphate (EPSP) to yield chorismate, which is the branch point compound that serves as the starting substrate for the three terminal pathways of aromatic amino acid biosynthesis. This reaction introduces a second double bond into the aromatic ring system. The polypeptide is Chorismate synthase (Bacillus velezensis (strain DSM 23117 / BGSC 10A6 / LMG 26770 / FZB42) (Bacillus amyloliquefaciens subsp. plantarum)).